Here is a 503-residue protein sequence, read N- to C-terminus: Maturase K (503 aa).

This sequence belongs to the intron maturase 2 family. MatK subfamily.

The protein localises to the plastid. It is found in the chloroplast. Functionally, usually encoded in the trnK tRNA gene intron. Probably assists in splicing its own and other chloroplast group II introns. This Rosa carolina (Pasture rose) protein is Maturase K.